Here is a 378-residue protein sequence, read N- to C-terminus: uncharacterized protein (378 aa).

A compositionally biased stretch (polar residues) spans 1-11; that stretch reads MSQQTTPAEQK. Residues 1-33 form a disordered region; sequence MSQQTTPAEQKSLQRKKPPFRADQVGSLLRSEP.

The protein to B.subtilis YxjH.

This is an uncharacterized protein from Bacillus subtilis (strain 168).